Here is a 554-residue protein sequence, read N- to C-terminus: Sesquithujene synthase A (554 aa).

2 residues coordinate Mg(2+): Asp-308 and Asp-312. The substrate site is built by Asp-308 and Asp-312. The DDXXD motif signature appears at 308 to 312 (DDMFD). A determine the stereoselectivity of the enzyme region spans residues 407 to 411 (SIGAN). Positions 449 and 452 each coordinate substrate. Mg(2+)-binding residues include Asn-452, Ser-456, and Glu-460.

It belongs to the terpene synthase family. As to quaternary structure, monomer. The cofactor is Mg(2+). It depends on Mn(2+) as a cofactor. Highly expressed in the husk. Detected in leaves.

The protein resides in the cytoplasm. The enzyme catalyses (2E,6E)-farnesyl diphosphate = sesquithujene + diphosphate. It catalyses the reaction (2Z,6Z)-farnesyl diphosphate = (1S,5S,6S)-alpha-bergamotene + diphosphate. The catalysed reaction is (2E,6E)-farnesyl diphosphate = (E)-beta-farnesene + diphosphate. It carries out the reaction (2E,6E)-farnesyl diphosphate = (S)-beta-bisabolene + diphosphate. The enzyme catalyses (2Z,6E)-farnesyl diphosphate = (-)-beta-curcumene + diphosphate. It catalyses the reaction (2E,6E)-farnesyl diphosphate = gamma-curcumene + diphosphate. The catalysed reaction is (2E,6E)-farnesyl diphosphate = sesquisabinene B + diphosphate. Its pathway is secondary metabolite biosynthesis; terpenoid biosynthesis. Its function is as follows. Sesquiterpene synthase involved in the production after herbivore attack of a blend of volatiles that attracts natural enemies of herbivores. Converts farnesyl diphosphate to sesquithujene, (S)-beta-bisabolene, (Z)-alpha-bergamotene, sesquisabinene B and several minor products. Can also act in vitro as a monoterpene synthase, converting geranyl diphosphate to (S)-(-)-limonene, beta-myrcene and 11 other monoterpenes. This is Sesquithujene synthase A from Zea mays (Maize).